Consider the following 62-residue polypeptide: Large ribosomal subunit protein bL28 (62 aa).

It belongs to the bacterial ribosomal protein bL28 family.

This Bacillus velezensis (strain DSM 23117 / BGSC 10A6 / LMG 26770 / FZB42) (Bacillus amyloliquefaciens subsp. plantarum) protein is Large ribosomal subunit protein bL28.